The primary structure comprises 307 residues: MKHLLSMADLEKDELFEILKLAEKLKEERYKGVVTDYLKNKSLAMIFELPSTRTRVSFEVAMTDLGGHALYLGWDELQLGRGEPIKDTARVLSRYVHAVMMRVREHSTIEEFARYSTVPVINGLSNLEHPCQVIADLLTIYEYRGDFKDVTLAWVGDGNNVCNSMILAAALTGMKMVISTPENYDPNPEIVKKAEEMGAKLRFVRDPKEAVKEADVIYTDVWTSMGQEAEKEARLKAFQPYQVSDELLKFSKDDVVVMHCLPAHRGEEITDEVMEGKHSIVFDQAENRLHAQKAILLKLLGKESEVY.

Carbamoyl phosphate contacts are provided by residues 51-54, Q78, R102, and 129-132; these read STRT and HPCQ. L-ornithine-binding positions include N160, D220, and 224–225; that span reads SM. Carbamoyl phosphate contacts are provided by residues 260 to 261 and R288; that span reads CL.

Belongs to the aspartate/ornithine carbamoyltransferase superfamily. OTCase family.

Its subcellular location is the cytoplasm. The enzyme catalyses carbamoyl phosphate + L-ornithine = L-citrulline + phosphate + H(+). Its pathway is amino-acid biosynthesis; L-arginine biosynthesis; L-arginine from L-ornithine and carbamoyl phosphate: step 1/3. Reversibly catalyzes the transfer of the carbamoyl group from carbamoyl phosphate (CP) to the N(epsilon) atom of ornithine (ORN) to produce L-citrulline. The protein is Ornithine carbamoyltransferase (argF) of Archaeoglobus fulgidus (strain ATCC 49558 / DSM 4304 / JCM 9628 / NBRC 100126 / VC-16).